The following is a 194-amino-acid chain: Peptidyl-tRNA hydrolase (194 aa).

Tyr-17 lines the tRNA pocket. His-22 functions as the Proton acceptor in the catalytic mechanism. TRNA-binding residues include Tyr-68, Asn-70, and Asn-116.

This sequence belongs to the PTH family. In terms of assembly, monomer.

It localises to the cytoplasm. It carries out the reaction an N-acyl-L-alpha-aminoacyl-tRNA + H2O = an N-acyl-L-amino acid + a tRNA + H(+). In terms of biological role, hydrolyzes ribosome-free peptidyl-tRNAs (with 1 or more amino acids incorporated), which drop off the ribosome during protein synthesis, or as a result of ribosome stalling. Functionally, catalyzes the release of premature peptidyl moieties from peptidyl-tRNA molecules trapped in stalled 50S ribosomal subunits, and thus maintains levels of free tRNAs and 50S ribosomes. The chain is Peptidyl-tRNA hydrolase from Pseudomonas syringae pv. tomato (strain ATCC BAA-871 / DC3000).